The sequence spans 77 residues: Small ribosomal subunit protein uS17 (77 aa).

It belongs to the universal ribosomal protein uS17 family. In terms of assembly, part of the 30S ribosomal subunit.

Functionally, one of the primary rRNA binding proteins, it binds specifically to the 5'-end of 16S ribosomal RNA. This Wolbachia sp. subsp. Brugia malayi (strain TRS) protein is Small ribosomal subunit protein uS17.